We begin with the raw amino-acid sequence, 123 residues long: Nitrogenase-stabilizing/protective protein NifW (123 aa).

It belongs to the NifW family. Homotrimer; associates with NifD.

Its function is as follows. May protect the nitrogenase Fe-Mo protein from oxidative damage. This is Nitrogenase-stabilizing/protective protein NifW from Rhodopseudomonas palustris (strain HaA2).